A 233-amino-acid polypeptide reads, in one-letter code: Large ribosomal subunit protein uL1 (233 aa).

This sequence belongs to the universal ribosomal protein uL1 family. As to quaternary structure, part of the 50S ribosomal subunit.

In terms of biological role, binds directly to 23S rRNA. The L1 stalk is quite mobile in the ribosome, and is involved in E site tRNA release. Its function is as follows. Protein L1 is also a translational repressor protein, it controls the translation of the L11 operon by binding to its mRNA. The polypeptide is Large ribosomal subunit protein uL1 (Campylobacter curvus (strain 525.92)).